The chain runs to 543 residues: ATP synthase subunit alpha (543 aa).

174–181 (GDRQTGKT) contacts ATP. Residues 521–543 (VEKKPDVDKAAPVDQEKIVAGEK) form a disordered region.

It belongs to the ATPase alpha/beta chains family. In terms of assembly, F-type ATPases have 2 components, CF(1) - the catalytic core - and CF(0) - the membrane proton channel. CF(1) has five subunits: alpha(3), beta(3), gamma(1), delta(1), epsilon(1). CF(0) has three main subunits: a(1), b(2) and c(9-12). The alpha and beta chains form an alternating ring which encloses part of the gamma chain. CF(1) is attached to CF(0) by a central stalk formed by the gamma and epsilon chains, while a peripheral stalk is formed by the delta and b chains.

It localises to the cell membrane. The enzyme catalyses ATP + H2O + 4 H(+)(in) = ADP + phosphate + 5 H(+)(out). Its function is as follows. Produces ATP from ADP in the presence of a proton gradient across the membrane. The alpha chain is a regulatory subunit. This Bifidobacterium longum (strain DJO10A) protein is ATP synthase subunit alpha.